The primary structure comprises 199 residues: V-type ATP synthase subunit E (199 aa).

This sequence belongs to the V-ATPase E subunit family.

Its function is as follows. Produces ATP from ADP in the presence of a proton gradient across the membrane. The protein is V-type ATP synthase subunit E of Clostridium botulinum (strain Hall / ATCC 3502 / NCTC 13319 / Type A).